The chain runs to 326 residues: Biotin synthase (326 aa).

Residues Tyr-41 to Arg-271 form the Radical SAM core domain. [4Fe-4S] cluster-binding residues include Cys-56, Cys-60, and Cys-63. [2Fe-2S] cluster is bound by residues Cys-102, Cys-134, Cys-194, and Arg-266.

Belongs to the radical SAM superfamily. Biotin synthase family. As to quaternary structure, homodimer. [4Fe-4S] cluster is required as a cofactor. [2Fe-2S] cluster serves as cofactor.

The enzyme catalyses (4R,5S)-dethiobiotin + (sulfur carrier)-SH + 2 reduced [2Fe-2S]-[ferredoxin] + 2 S-adenosyl-L-methionine = (sulfur carrier)-H + biotin + 2 5'-deoxyadenosine + 2 L-methionine + 2 oxidized [2Fe-2S]-[ferredoxin]. Its pathway is cofactor biosynthesis; biotin biosynthesis; biotin from 7,8-diaminononanoate: step 2/2. In terms of biological role, catalyzes the conversion of dethiobiotin (DTB) to biotin by the insertion of a sulfur atom into dethiobiotin via a radical-based mechanism. In Synechococcus sp. (strain RCC307), this protein is Biotin synthase.